The chain runs to 208 residues: Guanylate kinase (208 aa).

Residues 4–182 enclose the Guanylate kinase-like domain; the sequence is GQLYIISAPS…ALEELKSVFR (179 aa). 11-18 is a binding site for ATP; that stretch reads APSGAGKT.

This sequence belongs to the guanylate kinase family.

Its subcellular location is the cytoplasm. It carries out the reaction GMP + ATP = GDP + ADP. Essential for recycling GMP and indirectly, cGMP. This is Guanylate kinase from Hahella chejuensis (strain KCTC 2396).